A 107-amino-acid polypeptide reads, in one-letter code: Circadian clock oscillator protein KaiB (107 aa).

This sequence belongs to the KaiB family. In terms of assembly, may undergo a major conformational rearrangment; in the free state forms homooligomers. When bound to KaiC switches to a monomeric thioredoxin-fold (KaiB(fs)). The active oscillator complex is probably KaiC(6):KaiB(6).

Component of the KaiBC clock protein complex, which constitutes the main circadian regulator in cyanobacteria; it may modify the ATPase activity of KaiC. In terms of biological role, does not stimulate dephosphorylation of endogenous KaiC, although it does stimulate dephosphorylation of KiaC from S.elongatus strain PCC 7942. Reduces the ATPase activity of KaiC by about half in vitro, which may be its function in vivo. Functionally, may be a metamorphic protein which reversibly switches between an inactive tetrameric fold and a rare, thioredoxin-like monomeric fold (KaiB(fs)). KaiB(fs) binds phospho-KaiC, and perhaps clock output effectors. This chain is Circadian clock oscillator protein KaiB, found in Prochlorococcus marinus subsp. pastoris (strain CCMP1986 / NIES-2087 / MED4).